An 874-amino-acid polypeptide reads, in one-letter code: Alanine--tRNA ligase (874 aa).

Residues H561, H565, C663, and H667 each coordinate Zn(2+).

Belongs to the class-II aminoacyl-tRNA synthetase family. The cofactor is Zn(2+).

The protein resides in the cytoplasm. It catalyses the reaction tRNA(Ala) + L-alanine + ATP = L-alanyl-tRNA(Ala) + AMP + diphosphate. Its function is as follows. Catalyzes the attachment of alanine to tRNA(Ala) in a two-step reaction: alanine is first activated by ATP to form Ala-AMP and then transferred to the acceptor end of tRNA(Ala). Also edits incorrectly charged Ser-tRNA(Ala) and Gly-tRNA(Ala) via its editing domain. This chain is Alanine--tRNA ligase, found in Trichodesmium erythraeum (strain IMS101).